A 391-amino-acid polypeptide reads, in one-letter code: GTPase Obg (391 aa).

The Obg domain occupies 1 to 159 (MKFIDEALIR…RDLLLELMLL (159 aa)). The 174-residue stretch at 160–333 (ADVGMLGLPN…LTRDIMDFIE (174 aa)) folds into the OBG-type G domain. GTP-binding positions include 166–173 (GLPNAGKS), 191–195 (FTTLV), 213–216 (DIPG), 283–286 (NKID), and 314–316 (SAA). Mg(2+) contacts are provided by serine 173 and threonine 193.

Belongs to the TRAFAC class OBG-HflX-like GTPase superfamily. OBG GTPase family. Monomer. It depends on Mg(2+) as a cofactor.

It is found in the cytoplasm. Functionally, an essential GTPase which binds GTP, GDP and possibly (p)ppGpp with moderate affinity, with high nucleotide exchange rates and a fairly low GTP hydrolysis rate. Plays a role in control of the cell cycle, stress response, ribosome biogenesis and in those bacteria that undergo differentiation, in morphogenesis control. This Actinobacillus pleuropneumoniae serotype 5b (strain L20) protein is GTPase Obg.